A 276-amino-acid chain; its full sequence is Large ribosomal subunit protein uL2 (276 aa).

Residues 224 to 265 (VMNPVDHPHGGGEGRTASGRHPVSPWGLPTKGYKTRNNKRTD) are disordered.

The protein belongs to the universal ribosomal protein uL2 family. Part of the 50S ribosomal subunit. Forms a bridge to the 30S subunit in the 70S ribosome.

One of the primary rRNA binding proteins. Required for association of the 30S and 50S subunits to form the 70S ribosome, for tRNA binding and peptide bond formation. It has been suggested to have peptidyltransferase activity; this is somewhat controversial. Makes several contacts with the 16S rRNA in the 70S ribosome. The chain is Large ribosomal subunit protein uL2 from Dichelobacter nodosus (strain VCS1703A).